The following is an 899-amino-acid chain: Nuclear factor NF-kappa-B p100 subunit (899 aa).

Phosphoserine is present on residues serine 23 and serine 161. The RHD domain maps to 35 to 224 (ADGPYLVIVE…QPIHDSKSPG (190 aa)). A Nuclear localization signal motif is present at residues 337-341 (RKRRK). A GRR region spans residues 346 to 377 (FSQPFGGGSHMGGGSGGSAGGYGGAGGGGSLG). The segment at 403–434 (GGAQMAGSRRDTDAGEGAEEPRTPPEAPQGEP) is disordered. Residues 410–425 (SRRDTDAGEGAEEPRT) show a composition bias toward basic and acidic residues. At threonine 425 the chain carries Phosphothreonine. ANK repeat units follow at residues 487-516 (NGDT…HAQY), 526-555 (LHQT…DPTL), 559-590 (HGDS…HAVP), 599-628 (EGLY…EVEA), 633-663 (GGRT…NVNA), and 667-696 (AGNT…DIHA). Positions 698 to 734 (NEEPLCPLPSPSTSGSDSDSEGPERDTQRNFRGHTPL) are disordered. Residues serine 713, serine 715, and serine 717 each carry the phosphoserine modification. An ANK 7 repeat occupies 729–755 (RGHTPLDLTCSTKVKTLLLNAAQNTTE). Residues 764–851 (AGPGLSLGDA…EGVRLLKGPE (88 aa)) form the Death domain. Phosphoserine is present on serine 812. Basic and acidic residues predominate over residues 851–865 (ETRDKLPSTEVKEDS). The disordered stretch occupies residues 851–899 (ETRDKLPSTEVKEDSAYGSQSVEQEAEKLCPPPEPPGGLCHGHPQPQVH). Lysine 855 participates in a covalent cross-link: Glycyl lysine isopeptide (Lys-Gly) (interchain with G-Cter in ubiquitin). Residues serine 865 and serine 869 each carry the phosphoserine; by MAP3K14 modification. Positions 887–899 (GGLCHGHPQPQVH) are enriched in low complexity.

As to quaternary structure, component of the NF-kappa-B RelB-p52 complex. Homodimer; component of the NF-kappa-B p52-p52 complex. Component of the NF-kappa-B p65-p52 complex. Component of the NF-kappa-B p52-c-Rel complex. NFKB2/p52 interacts with NFKBIE. Component of a complex consisting of the NF-kappa-B p50-p50 homodimer and BCL3. Directly interacts with MEN1. Post-translationally, while translation occurs, the particular unfolded structure after the GRR repeat promotes the generation of p52 making it an acceptable substrate for the proteasome. This process is known as cotranslational processing. The processed form is active and the unprocessed form acts as an inhibitor (I kappa B-like), being able to form cytosolic complexes with NF-kappa B, trapping it in the cytoplasm. Complete folding of the region downstream of the GRR repeat precludes processing. Subsequent to MAP3K14-dependent serine phosphorylation, p100 polyubiquitination occurs then triggering its proteasome-dependent processing. In terms of processing, constitutive processing is tightly suppressed by its C-terminal processing inhibitory domain, named PID, which contains the death domain. Post-translationally, ubiquitinated by TRIM55; leading to processing by VCP and subsequent ubiquitin-dependent protein degradation by the proteasome. As to expression, highly expressed in lymph nodes and thymus.

It is found in the nucleus. Its subcellular location is the cytoplasm. In terms of biological role, NF-kappa-B is a pleiotropic transcription factor present in almost all cell types and is the endpoint of a series of signal transduction events that are initiated by a vast array of stimuli related to many biological processes such as inflammation, immunity, differentiation, cell growth, tumorigenesis and apoptosis. NF-kappa-B is a homo- or heterodimeric complex formed by the Rel-like domain-containing proteins RELA/p65, RELB, NFKB1/p105, NFKB1/p50, REL and NFKB2/p52. The dimers bind at kappa-B sites in the DNA of their target genes and the individual dimers have distinct preferences for different kappa-B sites that they can bind with distinguishable affinity and specificity. Different dimer combinations act as transcriptional activators or repressors, respectively. NF-kappa-B is controlled by various mechanisms of post-translational modification and subcellular compartmentalization as well as by interactions with other cofactors or corepressors. NF-kappa-B complexes are held in the cytoplasm in an inactive state complexed with members of the NF-kappa-B inhibitor (I-kappa-B) family. In a conventional activation pathway, I-kappa-B is phosphorylated by I-kappa-B kinases (IKKs) in response to different activators, subsequently degraded thus liberating the active NF-kappa-B complex which translocates to the nucleus. In a non-canonical activation pathway, the MAP3K14-activated CHUK/IKKA homodimer phosphorylates NFKB2/p100 associated with RelB, inducing its proteolytic processing to NFKB2/p52 and the formation of NF-kappa-B RelB-p52 complexes. The NF-kappa-B heterodimeric RelB-p52 complex is a transcriptional activator. The NF-kappa-B p52-p52 homodimer is a transcriptional repressor. NFKB2 appears to have dual functions such as cytoplasmic retention of attached NF-kappa-B proteins by p100 and generation of p52 by a cotranslational processing. The proteasome-mediated process ensures the production of both p52 and p100 and preserves their independent function. p52 binds to the kappa-B consensus sequence 5'-GGRNNYYCC-3', located in the enhancer region of genes involved in immune response and acute phase reactions. p52 and p100 are respectively the minor and major form; the processing of p100 being relatively poor. Isoform p49 is a subunit of the NF-kappa-B protein complex, which stimulates the HIV enhancer in synergy with p65. In concert with RELB, regulates the circadian clock by repressing the transcriptional activator activity of the CLOCK-BMAL1 heterodimer. In Mus musculus (Mouse), this protein is Nuclear factor NF-kappa-B p100 subunit (Nfkb2).